The chain runs to 706 residues: Double-strand break repair protein MRE11 (706 aa).

An N-acetylserine modification is found at S2. S2 carries the post-translational modification Phosphoserine. D20, H22, and D60 together coordinate Mn(2+). Positions 87–117 (RPVQFEVISDQSVNFGFSKFPWVNYQDGNLN) are interaction with NBN. N128 lines the Mn(2+) pocket. H129 serves as the catalytic Proton donor. Positions 217, 245, and 247 each coordinate Mn(2+). A Glycyl lysine isopeptide (Lys-Gly) (interchain with G-Cter in SUMO2) cross-link involves residue K255. S275 is modified (phosphoserine). K282 is covalently cross-linked (Glycyl lysine isopeptide (Lys-Gly) (interchain with G-Cter in UFM1)). Residue K339 forms a Glycyl lysine isopeptide (Lys-Gly) (interchain with G-Cter in ubiquitin) linkage. Residues K384 and K468 each participate in a glycyl lysine isopeptide (Lys-Gly) (interchain with G-Cter in SUMO) cross-link. A Glycyl lysine isopeptide (Lys-Gly) (interchain with G-Cter in ubiquitin) cross-link involves residue K481. Positions 505–514 (FRESRQRNTN) are enriched in basic and acidic residues. The interval 505–706 (FRESRQRNTN…SSSCPRRNRR (202 aa)) is disordered. The segment covering 531-541 (RSQSETSTSAF) has biased composition (polar residues). Residues 569–579 (GRGRGRGRRGA) show a composition bias toward basic residues. An asymmetric dimethylarginine mark is found at R570, R572, R574, R576, R577, R580, R587, R592, and R594. The short motif at 570–594 (RGRGRGRRGARGQSSAPRGGSQRGR) is the GAR element. The segment covering 580–589 (RGQSSAPRGG) has biased composition (low complexity). Residues 603–617 (RGRSSKATSSTSRNM) are compositionally biased toward polar residues. S618, S640, and S648 each carry phosphoserine. Acidic residues predominate over residues 643-653 (IEVDDSDEDDI). Residues 655–679 (PTNSRADQRWSGTTSSKRMSQSQTA) are compositionally biased toward polar residues. At K671 the chain carries N6-lactoyllysine. S674, S676, S686, and S699 each carry phosphoserine. The span at 684–694 (FESDEDDDDDP) shows a compositional bias: acidic residues.

Belongs to the MRE11/RAD32 family. In terms of assembly, component of the MRN complex composed of two heterodimers RAD50 and MRE11 associated with a single NBN. The MRN complexes dimerize on DNA to form joined MRN-MRN oligomers required for DNA double-strand break repair. As part of the MRN complex, interacts with MCM9; the interaction recruits the complex to DNA repair sites. Component of the BASC complex, at least composed of BRCA1, MSH2, MSH6, MLH1, ATM, BLM, RAD50, MRE11 and NBN. Found in a complex with TERF2. Interacts with DCLRE1C/Artemis and DCLRE1B/Apollo. Interacts with ATF2. Interacts with EXD2. Interacts with MRNIP. Interacts with SAMHD1; leading to stimulate 3'-5' exonuclease activity. Interacts (when ubiquitinated) with UBQLN4 (via its UBA domain). Interacts with CYREN (via XLF motif). Interacts with GFI1; promoting methylation by PRMT1. Interacts with DYNLL1; inhibiting the activity of MRE11. Interacts with C1QBP and RAD50; interaction takes place in absence of DNA damage to form the MRC (MRE11-RAD50-C1QBP) complex that inhibits the activity of MRE11. Interacts with AGER/RAGE; AGER is recruited to DNA double-strand break sites where it enhances MRE11 endonuclease activity to promote DNA repair. It depends on Mn(2+) as a cofactor. Post-translationally, phosphorylated by ATM at Ser-674 and Ser-676 in response to DNA damage, promoting MRE11 activity: phosphorylation activates MRE11 by preventing the interaction between MRE11 and the C1QBP inhibitor. Phosphorylation at Ser-648 by PLK1 primes for phosphorylation at Ser-686 by CK2, inhibiting recruitment of the MRN complex to DNA damage sites. Asymmetric dimethylation by PRMT1 promotes MRE11 exonuclease activity. In terms of processing, lactylation at Lys-671 by CREBBP/CBP in response to DNA damage promotes DNA binding and MRE11 activity. Post-translationally, acetylated on lysine residues by KAT2A /GCN5. Ubiquitinated following DNA damage. Ubiquitination triggers interaction with UBQLN4, leading to MRE11 removal from chromatin and degradation by the proteasome. Ubiquitinated at Lys-339 and Lys-481 by RNF126 via 'Lys-27'- and 'Lys-29'-linked polyubiquitin chains, promoting the exonuclease activity of MRE11. In terms of processing, SUMOylated by PIAS1, stabilizing MRE11 on chromatin during end resection. DeSUMOylated by SENP3 following removal from DNA double-strand breaks (DSBs). Post-translationally, ufmylation at Lys-282 promotes MRE11 activity and is required for activation of the ATM and ATR kinases by the MRN complex.

Its subcellular location is the nucleus. The protein localises to the chromosome. It localises to the telomere. With respect to regulation, interaction with SAMHD1 stimulates the double-strand-specific 3'-5' exonuclease activity. RBBP8/CtIP specifically promotes the endonuclease activity to clear protein-DNA adducts and generate clean double-strand break ends. DYNLL1-binding inhibits the activity of MRE11. MRE11 activity is inhibited by C1QBP: in absence of DNA damage, C1QBP interacts with unphosphorylated MRE11, preventing formation and activity of the MRN complex. In terms of biological role, core component of the MRN complex, which plays a central role in double-strand break (DSB) repair, DNA recombination, maintenance of telomere integrity and meiosis. The MRN complex is involved in the repair of DNA double-strand breaks (DSBs) via homologous recombination (HR), an error-free mechanism which primarily occurs during S and G2 phases. The complex (1) mediates the end resection of damaged DNA, which generates proper single-stranded DNA, a key initial steps in HR, and is (2) required for the recruitment of other repair factors and efficient activation of ATM and ATR upon DNA damage. Within the MRN complex, MRE11 possesses both single-strand endonuclease activity and double-strand-specific 3'-5' exonuclease activity. After DSBs, MRE11 is loaded onto DSBs sites and cleaves DNA by cooperating with RBBP8/CtIP to initiate end resection. MRE11 first endonucleolytically cleaves the 5' strand at DNA DSB ends to prevent non-homologous end joining (NHEJ) and licence HR. It then generates a single-stranded DNA gap via 3' to 5' exonucleolytic degradation to create entry sites for EXO1- and DNA2-mediated 5' to 3' long-range resection, which is required for single-strand invasion and recombination. RBBP8/CtIP specifically promotes the endonuclease activity of MRE11 to clear protein-DNA adducts and generate clean double-strand break ends. MRE11 endonuclease activity is also enhanced by AGER/RAGE. The MRN complex is also required for DNA damage signaling via activation of the ATM and ATR kinases: the nuclease activity of MRE11 is not required to activate ATM and ATR. The MRN complex is also required for the processing of R-loops. The MRN complex is involved in the activation of the cGAS-STING pathway induced by DNA damage during tumorigenesis: the MRN complex acts by displacing CGAS from nucleosome sequestration, thereby activating it. In telomeres the MRN complex may modulate t-loop formation. The sequence is that of Double-strand break repair protein MRE11 from Mus musculus (Mouse).